The following is a 304-amino-acid chain: Homoserine O-acetyltransferase (304 aa).

Cys142 (acyl-thioester intermediate) is an active-site residue. Substrate-binding residues include Lys163 and Ser191. The active-site Proton acceptor is His234. The active site involves Glu236. Arg248 provides a ligand contact to substrate.

It belongs to the MetA family.

Its subcellular location is the cytoplasm. The enzyme catalyses L-homoserine + acetyl-CoA = O-acetyl-L-homoserine + CoA. It functions in the pathway amino-acid biosynthesis; L-methionine biosynthesis via de novo pathway; O-acetyl-L-homoserine from L-homoserine: step 1/1. Transfers an acetyl group from acetyl-CoA to L-homoserine, forming acetyl-L-homoserine. This chain is Homoserine O-acetyltransferase, found in Thermotoga neapolitana (strain ATCC 49049 / DSM 4359 / NBRC 107923 / NS-E).